The following is a 31-amino-acid chain: GCLGDKCDYNNGCCSGYVCSRTWKWCVLAGP.

Disulfide bonds link C2–C14, C7–C19, and C13–C26.

In terms of tissue distribution, expressed by the venom gland.

The protein resides in the secreted. Agglutinates erythrocytes. This is U2-theraphotoxin-Hhn1a from Cyriopagopus hainanus (Chinese bird spider).